Reading from the N-terminus, the 88-residue chain is RNA-binding protein Hfq (88 aa).

In terms of domain architecture, Sm spans 9–68; the sequence is DPFLNALRRERIPVSIYLVNGIKLQGQIESFDQFVILLKNTVNQMVYKHAISTVVPARAV. The segment at 66 to 88 is disordered; it reads RAVSHHSASDRPQGERPQEKTEE. Basic and acidic residues predominate over residues 72–88; that stretch reads SASDRPQGERPQEKTEE.

Belongs to the Hfq family. Homohexamer.

RNA chaperone that binds small regulatory RNA (sRNAs) and mRNAs to facilitate mRNA translational regulation in response to envelope stress, environmental stress and changes in metabolite concentrations. Also binds with high specificity to tRNAs. The chain is RNA-binding protein Hfq from Aliivibrio fischeri (strain ATCC 700601 / ES114) (Vibrio fischeri).